A 156-amino-acid chain; its full sequence is 6,7-dimethyl-8-ribityllumazine synthase (156 aa).

5-amino-6-(D-ribitylamino)uracil is bound by residues Phe-22, 57-59, and 81-83; these read AVE and SVI. 86-87 serves as a coordination point for (2S)-2-hydroxy-3-oxobutyl phosphate; the sequence is GT. Residue His-89 is the Proton donor of the active site. 5-amino-6-(D-ribitylamino)uracil is bound at residue Phe-114. Arg-128 contacts (2S)-2-hydroxy-3-oxobutyl phosphate.

This sequence belongs to the DMRL synthase family. As to quaternary structure, forms an icosahedral capsid composed of 60 subunits, arranged as a dodecamer of pentamers.

It carries out the reaction (2S)-2-hydroxy-3-oxobutyl phosphate + 5-amino-6-(D-ribitylamino)uracil = 6,7-dimethyl-8-(1-D-ribityl)lumazine + phosphate + 2 H2O + H(+). The protein operates within cofactor biosynthesis; riboflavin biosynthesis; riboflavin from 2-hydroxy-3-oxobutyl phosphate and 5-amino-6-(D-ribitylamino)uracil: step 1/2. Functionally, catalyzes the formation of 6,7-dimethyl-8-ribityllumazine by condensation of 5-amino-6-(D-ribitylamino)uracil with 3,4-dihydroxy-2-butanone 4-phosphate. This is the penultimate step in the biosynthesis of riboflavin. The polypeptide is 6,7-dimethyl-8-ribityllumazine synthase (Aliivibrio salmonicida (strain LFI1238) (Vibrio salmonicida (strain LFI1238))).